A 478-amino-acid chain; its full sequence is Probable cytosolic Fe-S cluster assembly factor AGAP009023 (478 aa).

Cys-23, Cys-69, Cys-72, Cys-75, Cys-189, Cys-245, Cys-396, and Cys-400 together coordinate [4Fe-4S] cluster.

The protein belongs to the NARF family.

Its function is as follows. Component of the cytosolic iron-sulfur (Fe/S) protein assembly machinery. Required for maturation of extramitochondrial Fe/S proteins. The polypeptide is Probable cytosolic Fe-S cluster assembly factor AGAP009023 (Anopheles gambiae (African malaria mosquito)).